A 565-amino-acid chain; its full sequence is Periplasmic trehalase (565 aa).

An N-terminal signal peptide occupies residues 1–30 (MKSPAPSRPQKMALIPACIFLCFAALSVQA). Residues Arg-152, 159–160 (WD), Asn-196, 205–207 (RSQ), 277–279 (RPE), and Gly-310 contribute to the substrate site. Catalysis depends on proton donor/acceptor residues Asp-312 and Glu-496. Glu-511 serves as a coordination point for substrate. A disordered region spans residues 538–565 (PCDNVPATRPTVKSATTQPSTKEAQPTP). Positions 548 to 565 (TVKSATTQPSTKEAQPTP) are enriched in polar residues.

The protein belongs to the glycosyl hydrolase 37 family. As to quaternary structure, monomer.

The protein resides in the periplasm. It carries out the reaction alpha,alpha-trehalose + H2O = alpha-D-glucose + beta-D-glucose. Provides the cells with the ability to utilize trehalose at high osmolarity by splitting it into glucose molecules that can subsequently be taken up by the phosphotransferase-mediated uptake system. The sequence is that of Periplasmic trehalase from Escherichia coli O8 (strain IAI1).